The chain runs to 344 residues: AA9 family lytic polysaccharide monooxygenase cel61A (344 aa).

A signal peptide spans 1–21 (MIQKLSNLLVTALAVATGVVG). A Cu(2+)-binding site is contributed by histidine 22. Intrachain disulfides connect cysteine 77/cysteine 198 and cysteine 118/cysteine 122. Asparagine 80 is a glycosylation site (N-linked (GlcNAc...) asparagine). Residue histidine 107 coordinates Cu(2+). Asparagine 158 carries an N-linked (GlcNAc...) asparagine glycan. 2 residues coordinate O2: histidine 184 and glutamine 193. Residue tyrosine 195 coordinates Cu(2+). The interval 262 to 310 (ATASATVPGGGSGPTSRTTTTARTTQASSRPSSTPPATTSAPAGGPTQT) is disordered. Low complexity predominate over residues 275-310 (PTSRTTTTARTTQASSRPSSTPPATTSAPAGGPTQT). The CBM1 domain occupies 307 to 343 (PTQTLYGQCGGSGYSGPTRCAPPATCSTLNPYYAQCL).

It belongs to the polysaccharide monooxygenase AA9 family. The cofactor is Cu(2+).

The protein resides in the secreted. It catalyses the reaction [(1-&gt;4)-beta-D-glucosyl]n+m + reduced acceptor + O2 = 4-dehydro-beta-D-glucosyl-[(1-&gt;4)-beta-D-glucosyl]n-1 + [(1-&gt;4)-beta-D-glucosyl]m + acceptor + H2O.. Its function is as follows. Lytic polysaccharide monooxygenase (LPMO) that depolymerizes crystalline and amorphous polysaccharides via the oxidation of scissile alpha- or beta-(1-4)-glycosidic bonds, yielding C1 or C4 oxidation products. Catalysis by LPMOs requires the reduction of the active-site copper from Cu(II) to Cu(I) by a reducing agent and H(2)O(2) or O(2) as a cosubstrate. Shows activity on beta-glucan and amorphous cellulose. Does not show beta-1-3-glucanase, beta-1,6-glucanase, mannanase, xylanase, beta-1,3-galactosidase, amylase, pectinase, nor chitinase activities. The sequence is that of AA9 family lytic polysaccharide monooxygenase cel61A from Hypocrea jecorina (Trichoderma reesei).